Reading from the N-terminus, the 78-residue chain is MVKLRPKQCGRKQRTYRIVAIESQSRQEGKVIKEVEFYNPRREETQLDILAITTLCGSGVKLTETVCNIFRRATFKIT.

Belongs to the bacterial ribosomal protein bS16 family.

The protein resides in the plastid. It localises to the chloroplast. The polypeptide is Small ribosomal subunit protein bS16c (Adiantum capillus-veneris (Maidenhair fern)).